A 389-amino-acid polypeptide reads, in one-letter code: Urotensin-2 receptor (389 aa).

The span at Met-1–Ser-10 shows a compositional bias: polar residues. The disordered stretch occupies residues Met-1–Pro-39. The Extracellular segment spans residues Met-1 to Ile-54. Asn-29 and Asn-33 each carry an N-linked (GlcNAc...) asparagine glycan. The span at Ala-30–Pro-39 shows a compositional bias: polar residues. A helical membrane pass occupies residues Gly-55 to Cys-77. Topologically, residues Arg-78 to Tyr-87 are cytoplasmic. A helical transmembrane segment spans residues Val-88–Thr-113. Residues Lys-114–Arg-124 lie on the Extracellular side of the membrane. Cys-123 and Cys-199 are disulfide-bonded. A helical membrane pass occupies residues Val-125–Ser-146. At Glu-147–Lys-167 the chain is on the cytoplasmic side. A helical membrane pass occupies residues Leu-168–Leu-186. Residues Ala-187–Arg-209 are Extracellular-facing. The helical transmembrane segment at Ala-210–Ala-232 threads the bilayer. Residues Arg-233 to Arg-258 are Cytoplasmic-facing. The chain crosses the membrane as a helical span at residues Leu-259–His-284. Residues Gln-285–Asn-297 lie on the Extracellular side of the membrane. A helical membrane pass occupies residues Tyr-298–Leu-318. Over Thr-319 to Ala-389 the chain is Cytoplasmic. Residues Gly-328–Ala-389 are disordered. Over residues Arg-331 to Gly-340 the composition is skewed to gly residues. The span at Ser-355–Asp-368 shows a compositional bias: polar residues. A compositionally biased stretch (pro residues) spans Pro-377–Ala-389.

It belongs to the G-protein coupled receptor 1 family. As to expression, most abundant expression in the heart and pancreas.

It localises to the cell membrane. High affinity receptor for urotensin-2 and urotensin-2B. The activity of this receptor is mediated by a G-protein that activate a phosphatidylinositol-calcium second messenger system. The sequence is that of Urotensin-2 receptor (UTS2R) from Homo sapiens (Human).